Consider the following 196-residue polypeptide: GTP cyclohydrolase-2 (196 aa).

49–53 (RVHSE) contributes to the GTP binding site. Zn(2+) contacts are provided by C54, C65, and C67. Residues Q70, 92–94 (EGR), and T114 each bind GTP. Residue D126 is the Proton acceptor of the active site. The active-site Nucleophile is R128. Residues T149 and K154 each coordinate GTP.

This sequence belongs to the GTP cyclohydrolase II family. As to quaternary structure, homodimer. Zn(2+) serves as cofactor.

It catalyses the reaction GTP + 4 H2O = 2,5-diamino-6-hydroxy-4-(5-phosphoribosylamino)-pyrimidine + formate + 2 phosphate + 3 H(+). The protein operates within cofactor biosynthesis; riboflavin biosynthesis; 5-amino-6-(D-ribitylamino)uracil from GTP: step 1/4. Its function is as follows. Catalyzes the conversion of GTP to 2,5-diamino-6-ribosylamino-4(3H)-pyrimidinone 5'-phosphate (DARP), formate and pyrophosphate. The chain is GTP cyclohydrolase-2 from Shigella dysenteriae serotype 1 (strain Sd197).